The primary structure comprises 476 residues: Glucan endo-1,3-beta-glucosidase 9 (476 aa).

Positions 1–25 are cleaved as a signal peptide; it reads MARRLFLLLLAVTAGLSLTGTTVRA. Asparagine 88 and asparagine 101 each carry an N-linked (GlcNAc...) asparagine glycan. Glutamate 122 functions as the Proton donor in the catalytic mechanism. Asparagine 184, asparagine 216, asparagine 277, asparagine 320, asparagine 342, asparagine 374, and asparagine 405 each carry an N-linked (GlcNAc...) asparagine glycan. Cysteine 364 and cysteine 424 are disulfide-bonded. Residue serine 453 is the site of GPI-anchor amidated serine attachment. Residues 454 to 476 constitute a propeptide, removed in mature form; that stretch reads SSQTPNFFQSWPLLLLFLLSGLF.

Belongs to the glycosyl hydrolase 17 family. Post-translationally, contains two additional disulfide bonds.

The protein localises to the secreted. Its subcellular location is the cell wall. It localises to the cell membrane. The enzyme catalyses Hydrolysis of (1-&gt;3)-beta-D-glucosidic linkages in (1-&gt;3)-beta-D-glucans.. The sequence is that of Glucan endo-1,3-beta-glucosidase 9 from Arabidopsis thaliana (Mouse-ear cress).